The following is a 389-amino-acid chain: Capsule polysaccharide export protein KpsS (389 aa).

The polypeptide is Capsule polysaccharide export protein KpsS (kpsS) (Escherichia coli).